Reading from the N-terminus, the 375-residue chain is Alpha-2,8-sialyltransferase 8B (375 aa).

Residues methionine 1–arginine 6 lie on the Cytoplasmic side of the membrane. A helical; Signal-anchor for type II membrane protein membrane pass occupies residues serine 7 to alanine 23. Over aspartate 24–threonine 375 the chain is Lumenal. Asparagine 60, asparagine 72, asparagine 89, and asparagine 134 each carry an N-linked (GlcNAc...) asparagine glycan. Disulfide bonds link cysteine 157–cysteine 307 and cysteine 171–cysteine 371. CMP-N-acetyl-beta-neuraminate contacts are provided by asparagine 162 and asparagine 185. Residues asparagine 219 and asparagine 234 are each glycosylated (N-linked (GlcNAc...) asparagine). Threonine 294, threonine 295, glycine 296, tryptophan 316, tyrosine 329, and histidine 330 together coordinate CMP-N-acetyl-beta-neuraminate. The Proton donor/acceptor role is filled by histidine 346.

It belongs to the glycosyltransferase 29 family. Post-translationally, autopolysialylated. Autopolysialylation is not a prerequisite for the polysialylation acitity, but enhances the polysialylation acitity.

The protein localises to the golgi apparatus membrane. It is found in the secreted. The protein resides in the cell membrane. It catalyses the reaction [N-acetyl-alpha-D-neuraminosyl-(2-&gt;8)](n) + CMP-N-acetyl-beta-neuraminate = [N-acetyl-alpha-D-neuraminosyl-(2-&gt;8)](n+1) + CMP + H(+). It participates in protein modification; protein glycosylation. In terms of biological role, catalyzes the transfer of a sialic acid from a CMP-linked sialic acid donor onto a terminal alpha-2,3-, alpha-2,6-, or alpha-2,8-linked sialic acid of an N-linked glycan acceptor through alpha-2,8-linkages. Therefore, participates in polysialic acid synthesis on various sialylated N-acetyllactosaminyl oligosaccharides (alpha-2,3-, alpha-2,6-, or alpha-2,8-linked sialic acid), including NCAM1, NCAM1 N-glycans, FETUB N-glycans, and to a lesser extent sialylparagloboside (SPG) and AHSG, which does not require the initial addition of an alpha 2,8-sialic acid. However, does not exhibit sialic acid-polymerase activity. Catalyzes polysialic acid synthesis in the hippocampal on NCAM1 and supports neurite outgrowth. ST8SIA2-mediated polysialylation influences on oligodendrocyte differentiation and may promote the integrity of myelin and axons. This is Alpha-2,8-sialyltransferase 8B from Mus musculus (Mouse).